Reading from the N-terminus, the 406-residue chain is Elongation factor Tu (406 aa).

The tr-type G domain maps to 10-215; sequence KPHVNVGTIG…AIDEYIPTPV (206 aa). The interval 19–26 is G1; it reads GHVDHGKT. Residue 19–26 coordinates GTP; it reads GHVDHGKT. A Mg(2+)-binding site is contributed by Thr26. The tract at residues 61–65 is G2; that stretch reads GITIN. Residues 82 to 85 are G3; that stretch reads DCPG. Residues 82–86 and 137–140 contribute to the GTP site; these read DCPGH and NKVD. Residues 137–140 are G4; sequence NKVD. The G5 stretch occupies residues 175-177; sequence SAL.

The protein belongs to the TRAFAC class translation factor GTPase superfamily. Classic translation factor GTPase family. EF-Tu/EF-1A subfamily. As to quaternary structure, monomer.

The protein localises to the cytoplasm. The enzyme catalyses GTP + H2O = GDP + phosphate + H(+). Its function is as follows. GTP hydrolase that promotes the GTP-dependent binding of aminoacyl-tRNA to the A-site of ribosomes during protein biosynthesis. This Thermus aquaticus protein is Elongation factor Tu.